Reading from the N-terminus, the 117-residue chain is UPF0102 protein Rsph17025_0472 (117 aa).

This sequence belongs to the UPF0102 family.

This chain is UPF0102 protein Rsph17025_0472, found in Cereibacter sphaeroides (strain ATCC 17025 / ATH 2.4.3) (Rhodobacter sphaeroides).